We begin with the raw amino-acid sequence, 637 residues long: Biosynthetic arginine decarboxylase (637 aa).

K101 is modified (N6-(pyridoxal phosphate)lysine). Residue 286-296 (FDVGGGLAVDY) participates in substrate binding.

This sequence belongs to the Orn/Lys/Arg decarboxylase class-II family. SpeA subfamily. The cofactor is Mg(2+). Pyridoxal 5'-phosphate serves as cofactor.

It carries out the reaction L-arginine + H(+) = agmatine + CO2. Its pathway is amine and polyamine biosynthesis; agmatine biosynthesis; agmatine from L-arginine: step 1/1. Functionally, catalyzes the biosynthesis of agmatine from arginine. In Shewanella baltica (strain OS223), this protein is Biosynthetic arginine decarboxylase.